The primary structure comprises 225 residues: Ribonuclease HII (225 aa).

In terms of domain architecture, RNase H type-2 spans Gly35–Asp225. A divalent metal cation-binding residues include Asp41, Glu42, and Asp137.

Belongs to the RNase HII family. It depends on Mn(2+) as a cofactor. Mg(2+) is required as a cofactor.

It localises to the cytoplasm. The catalysed reaction is Endonucleolytic cleavage to 5'-phosphomonoester.. In terms of biological role, endonuclease that specifically degrades the RNA of RNA-DNA hybrids. The sequence is that of Ribonuclease HII from Trichormus variabilis (strain ATCC 29413 / PCC 7937) (Anabaena variabilis).